Consider the following 445-residue polypeptide: Chromosome partition protein MukF (445 aa).

Residues 213–241 (LSETSSTLRELQDTLQAASDELQTQILDI) form a leucine-zipper region.

Belongs to the MukF family. Interacts, and probably forms a ternary complex, with MukE and MukB via its C-terminal region. The complex formation is stimulated by calcium or magnesium. It is required for an interaction between MukE and MukB.

The protein localises to the cytoplasm. It is found in the nucleoid. Its function is as follows. Involved in chromosome condensation, segregation and cell cycle progression. May participate in facilitating chromosome segregation by condensation DNA from both sides of a centrally located replisome during cell division. Not required for mini-F plasmid partitioning. Probably acts via its interaction with MukB and MukE. Overexpression results in anucleate cells. It has a calcium binding activity. The protein is Chromosome partition protein MukF of Vibrio parahaemolyticus serotype O3:K6 (strain RIMD 2210633).